We begin with the raw amino-acid sequence, 564 residues long: Proline--tRNA ligase (564 aa).

This sequence belongs to the class-II aminoacyl-tRNA synthetase family. ProS type 1 subfamily. Homodimer.

It localises to the cytoplasm. It catalyses the reaction tRNA(Pro) + L-proline + ATP = L-prolyl-tRNA(Pro) + AMP + diphosphate. In terms of biological role, catalyzes the attachment of proline to tRNA(Pro) in a two-step reaction: proline is first activated by ATP to form Pro-AMP and then transferred to the acceptor end of tRNA(Pro). As ProRS can inadvertently accommodate and process non-cognate amino acids such as alanine and cysteine, to avoid such errors it has two additional distinct editing activities against alanine. One activity is designated as 'pretransfer' editing and involves the tRNA(Pro)-independent hydrolysis of activated Ala-AMP. The other activity is designated 'posttransfer' editing and involves deacylation of mischarged Ala-tRNA(Pro). The misacylated Cys-tRNA(Pro) is not edited by ProRS. The protein is Proline--tRNA ligase of Xanthomonas oryzae pv. oryzae (strain KACC10331 / KXO85).